The sequence spans 663 residues: Protein-arginine deiminase type-1 (663 aa).

Ca(2+)-binding residues include Asn-153, Asp-155, Asp-157, Asp-165, Asp-176, Asp-179, Gln-351, Glu-353, Lys-364, Asp-371, Ser-372, Asn-375, Phe-409, and Leu-412. The active-site Nucleophile is the Cys-645.

Belongs to the protein arginine deiminase family. Monomer. It depends on Ca(2+) as a cofactor. As to expression, detected in epidermal keratinocytes (at protein level). Epidermis, prostate, testis, placenta, spleen and thymus.

It localises to the cytoplasm. It catalyses the reaction L-arginyl-[protein] + H2O = L-citrullyl-[protein] + NH4(+). In terms of biological role, catalyzes the deimination of arginine residues of proteins. The polypeptide is Protein-arginine deiminase type-1 (PADI1) (Homo sapiens (Human)).